The chain runs to 95 residues: Co-chaperonin GroES (95 aa).

This sequence belongs to the GroES chaperonin family. Heptamer of 7 subunits arranged in a ring. Interacts with the chaperonin GroEL.

It localises to the cytoplasm. Its function is as follows. Together with the chaperonin GroEL, plays an essential role in assisting protein folding. The GroEL-GroES system forms a nano-cage that allows encapsulation of the non-native substrate proteins and provides a physical environment optimized to promote and accelerate protein folding. GroES binds to the apical surface of the GroEL ring, thereby capping the opening of the GroEL channel. The protein is Co-chaperonin GroES of Clostridium botulinum (strain ATCC 19397 / Type A).